The primary structure comprises 659 residues: UDP-glucuronate:xylan alpha-glucuronosyltransferase 1 (659 aa).

Residues 1-14 show a composition bias toward low complexity; the sequence is MANSPAAPAPTTTT. A disordered region spans residues 1–20; the sequence is MANSPAAPAPTTTTGGDSRR. The helical; Signal-anchor for type II membrane protein transmembrane segment at 70-90 threads the bilayer; the sequence is FQIVKLLLFILLSATLFTIIY. 2 residues coordinate Mn(2+): Asp416 and Asp418. Substrate contacts are provided by residues 416–418, 445–447, 472–476, and 526–531; these read DAD, NSG, NGGDQ, and HYLGMK. A Mn(2+)-binding site is contributed by His526.

This sequence belongs to the glycosyltransferase 8 family. Glycogenin subfamily. It depends on Mn(2+) as a cofactor.

It localises to the golgi apparatus membrane. In terms of biological role, glycosyltransferase required for the addition of both glucuronic acid and 4-O-methylglucuronic acid branches to xylan in stem cell walls. In association with GUX2, is responsible for almost all of the substitutions of the xylan backbone in stem glucuronoxylan. The sequence is that of UDP-glucuronate:xylan alpha-glucuronosyltransferase 1 (GUX1) from Arabidopsis thaliana (Mouse-ear cress).